Here is a 352-residue protein sequence, read N- to C-terminus: Chorismate synthase (352 aa).

Positions 48 and 54 each coordinate NADP(+). FMN is bound by residues 125 to 127 (RSS), 238 to 239 (NA), Gly-278, 293 to 297 (KPTSS), and Arg-319.

This sequence belongs to the chorismate synthase family. As to quaternary structure, homotetramer. FMNH2 serves as cofactor.

It catalyses the reaction 5-O-(1-carboxyvinyl)-3-phosphoshikimate = chorismate + phosphate. Its pathway is metabolic intermediate biosynthesis; chorismate biosynthesis; chorismate from D-erythrose 4-phosphate and phosphoenolpyruvate: step 7/7. Its function is as follows. Catalyzes the anti-1,4-elimination of the C-3 phosphate and the C-6 proR hydrogen from 5-enolpyruvylshikimate-3-phosphate (EPSP) to yield chorismate, which is the branch point compound that serves as the starting substrate for the three terminal pathways of aromatic amino acid biosynthesis. This reaction introduces a second double bond into the aromatic ring system. This chain is Chorismate synthase, found in Bordetella avium (strain 197N).